The primary structure comprises 425 residues: Enolase (425 aa).

Gln163 contributes to the (2R)-2-phosphoglycerate binding site. The active-site Proton donor is the Glu205. Mg(2+) contacts are provided by Asp242, Glu285, and Asp312. Residues Lys337, Arg366, Ser367, and Lys388 each contribute to the (2R)-2-phosphoglycerate site. Lys337 acts as the Proton acceptor in catalysis.

Belongs to the enolase family. The cofactor is Mg(2+).

It localises to the cytoplasm. The protein resides in the secreted. The protein localises to the cell surface. It carries out the reaction (2R)-2-phosphoglycerate = phosphoenolpyruvate + H2O. It participates in carbohydrate degradation; glycolysis; pyruvate from D-glyceraldehyde 3-phosphate: step 4/5. Functionally, catalyzes the reversible conversion of 2-phosphoglycerate (2-PG) into phosphoenolpyruvate (PEP). It is essential for the degradation of carbohydrates via glycolysis. The protein is Enolase of Ruegeria pomeroyi (strain ATCC 700808 / DSM 15171 / DSS-3) (Silicibacter pomeroyi).